We begin with the raw amino-acid sequence, 341 residues long: Anthranilate phosphoribosyltransferase (341 aa).

Residues glycine 85, 88-89, threonine 93, 95-98, 113-121, and serine 125 each bind 5-phospho-alpha-D-ribose 1-diphosphate; these read GD, NIST, and KHGNRSASG. Glycine 85 is a binding site for anthranilate. Serine 97 contacts Mg(2+). Residue asparagine 116 coordinates anthranilate. Residue arginine 171 participates in anthranilate binding. Aspartate 230 and glutamate 231 together coordinate Mg(2+).

The protein belongs to the anthranilate phosphoribosyltransferase family. As to quaternary structure, homodimer. Mg(2+) is required as a cofactor.

The catalysed reaction is N-(5-phospho-beta-D-ribosyl)anthranilate + diphosphate = 5-phospho-alpha-D-ribose 1-diphosphate + anthranilate. It participates in amino-acid biosynthesis; L-tryptophan biosynthesis; L-tryptophan from chorismate: step 2/5. In terms of biological role, catalyzes the transfer of the phosphoribosyl group of 5-phosphorylribose-1-pyrophosphate (PRPP) to anthranilate to yield N-(5'-phosphoribosyl)-anthranilate (PRA). In Prochlorococcus marinus (strain SARG / CCMP1375 / SS120), this protein is Anthranilate phosphoribosyltransferase.